The following is a 346-amino-acid chain: DNA-directed RNA polymerase subunit alpha (346 aa).

Positions methionine 1 to glutamate 243 are alpha N-terminal domain (alpha-NTD). The tract at residues leucine 260–alanine 346 is alpha C-terminal domain (alpha-CTD).

The protein belongs to the RNA polymerase alpha chain family. Homodimer. The RNAP catalytic core consists of 2 alpha, 1 beta, 1 beta' and 1 omega subunit. When a sigma factor is associated with the core the holoenzyme is formed, which can initiate transcription.

The enzyme catalyses RNA(n) + a ribonucleoside 5'-triphosphate = RNA(n+1) + diphosphate. Its function is as follows. DNA-dependent RNA polymerase catalyzes the transcription of DNA into RNA using the four ribonucleoside triphosphates as substrates. The sequence is that of DNA-directed RNA polymerase subunit alpha from Sorangium cellulosum (strain So ce56) (Polyangium cellulosum (strain So ce56)).